Consider the following 180-residue polypeptide: Large ribosomal subunit protein uL5 (180 aa).

Belongs to the universal ribosomal protein uL5 family. As to quaternary structure, part of the 50S ribosomal subunit; part of the 5S rRNA/L5/L18/L25 subcomplex. Contacts the 5S rRNA and the P site tRNA. Forms a bridge to the 30S subunit in the 70S ribosome.

This is one of the proteins that bind and probably mediate the attachment of the 5S RNA into the large ribosomal subunit, where it forms part of the central protuberance. In the 70S ribosome it contacts protein S13 of the 30S subunit (bridge B1b), connecting the 2 subunits; this bridge is implicated in subunit movement. Contacts the P site tRNA; the 5S rRNA and some of its associated proteins might help stabilize positioning of ribosome-bound tRNAs. This chain is Large ribosomal subunit protein uL5, found in Streptococcus equi subsp. equi (strain 4047).